Here is a 551-residue protein sequence, read N- to C-terminus: RanBD1 domain-containing protein C584.03c (551 aa).

Residues 1-309 (MDELLNVASH…LLLKYADDET (309 aa)) enclose the RanBD1 domain. Serine 441 carries the post-translational modification Phosphoserine. The interval 522-551 (SVIPHSEPESSSKVINCQAKLNVEKEKKNP) is disordered.

The protein localises to the nucleus. The chain is RanBD1 domain-containing protein C584.03c from Schizosaccharomyces pombe (strain 972 / ATCC 24843) (Fission yeast).